The chain runs to 226 residues: Uracil-DNA glycosylase (226 aa).

Asp64 serves as the catalytic Proton acceptor.

The protein belongs to the uracil-DNA glycosylase (UDG) superfamily. UNG family.

It is found in the cytoplasm. The enzyme catalyses Hydrolyzes single-stranded DNA or mismatched double-stranded DNA and polynucleotides, releasing free uracil.. In terms of biological role, excises uracil residues from the DNA which can arise as a result of misincorporation of dUMP residues by DNA polymerase or due to deamination of cytosine. This Proteus mirabilis (strain HI4320) protein is Uracil-DNA glycosylase.